The following is a 291-amino-acid chain: MANNTLHRYLFEDLSVRGELVQLDDAYQQIISSKEYPKPVQNLLGELLVATTLLTATLKFEGSITLQLQGNGPVSLVVINGDNDQKVRGVARFEGEIADDATLHQLMGKGYLVITISPKDGERYQGVVALEGKDLAECFEGYFERSEQLKTRLWLRLGEFEGKPHAAGMLLQVMPDGTGSSDDFEHLEQLTDTVKNEELFSLEAEDVLYRLYNQDKVQLFEPQNVEFFCGCSRERSGGAIITIERSEVDDIIATEGKVSLHCDYCGTSYDFDSIDVAHLFEEATKGNDTVH.

2 disulfide bridges follow: cysteine 229/cysteine 231 and cysteine 262/cysteine 265.

Belongs to the HSP33 family. Under oxidizing conditions two disulfide bonds are formed involving the reactive cysteines. Under reducing conditions zinc is bound to the reactive cysteines and the protein is inactive.

Its subcellular location is the cytoplasm. In terms of biological role, redox regulated molecular chaperone. Protects both thermally unfolding and oxidatively damaged proteins from irreversible aggregation. Plays an important role in the bacterial defense system toward oxidative stress. In Aliivibrio salmonicida (strain LFI1238) (Vibrio salmonicida (strain LFI1238)), this protein is 33 kDa chaperonin.